Here is a 172-residue protein sequence, read N- to C-terminus: Adenine phosphoribosyltransferase (172 aa).

This sequence belongs to the purine/pyrimidine phosphoribosyltransferase family. In terms of assembly, homodimer.

It is found in the cytoplasm. The catalysed reaction is AMP + diphosphate = 5-phospho-alpha-D-ribose 1-diphosphate + adenine. It functions in the pathway purine metabolism; AMP biosynthesis via salvage pathway; AMP from adenine: step 1/1. Its function is as follows. Catalyzes a salvage reaction resulting in the formation of AMP, that is energically less costly than de novo synthesis. This is Adenine phosphoribosyltransferase from Trichormus variabilis (strain ATCC 29413 / PCC 7937) (Anabaena variabilis).